Here is an 80-residue protein sequence, read N- to C-terminus: Lantibiotic Flvalpha.a (80 aa).

Residues 1–38 (MNKNPIYRSEEEAKDIACGNVAAELDENSQALDAINGA) constitute a propeptide, cleaved by FlvT. Thr-43 and Thr-47 each carry 2,3-didehydrobutyrine; by FlvM1. A cross-link (beta-methyllanthionine (Thr-Cys); by FlvM1) is located at residues 52 to 55 (TVGC). A cross-link (lanthionine (Ser-Cys); by FlvM1) is located at residues 58 to 68 (SYGLGNGGYCC). 2 consecutive cross-links (beta-methyllanthionine (Thr-Cys); by FlvM1) follow at residues 69-74 (TYTVEC) and 71-78 (TVECSKTC).

The lanthionine formed by Ser-58 and Cys-68 forms a putative lipid II binding motif. In terms of processing, maturation of FlvA1 peptides involves the enzymatic conversion of Thr, and Ser into dehydrated AA and the formation of thioether bonds with cysteines. Modifications are processed by the flavecin synthetase FlvM1. This is followed by membrane translocation and cleavage of the modified precursor. Post-translationally, contains DL-lanthionine and DL-beta-methyllanthionine, when coepressed in E.coli with the flavecin synthetase FlvM1.

It localises to the secreted. Functionally, lanthionine-containing peptide antibiotic (lantibiotic) only active on Gram-positive bacteria in synergy with Flvbeta peptides, which are encoded by the same operon than Flvalpha.a. Shows antibacterial activity in synergy with Flvbeta.b, Flvbeta.c, Flvbeta.e and Flvbeta.g. Does not show antibacterial activity when tested with Flvbeta.a, Flvbeta.d, Flvbeta.f and Flvbeta.h. The bactericidal activity of lantibiotics is based on depolarization of energized bacterial cytoplasmic membranes, initiated by the formation of aqueous transmembrane pores. In Ruminococcus flavefaciens, this protein is Lantibiotic Flvalpha.a.